Reading from the N-terminus, the 389-residue chain is Teichoic acid ribitol-phosphate primase (389 aa).

The protein belongs to the CDP-glycerol glycerophosphotransferase family.

The protein localises to the cell membrane. It carries out the reaction 4-O-[(2R)-glycerylphospho]-N-acetyl-beta-D-mannosaminyl-(1-&gt;4)-N-acetyl-alpha-D-glucosaminyl di-trans,octa-cis-undecaprenyl diphosphate + CDP-L-ribitol = 4-O-[1-D-ribitylphospho-(2R)-1-glycerylphospho]-N-acetyl-beta-D-mannosaminyl-(1-&gt;4)-N-acetyl-alpha-D-glucosaminyl di-trans,octa-cis-undecaprenyl diphosphate + CMP + H(+). It functions in the pathway cell wall biogenesis; poly(ribitol phosphate) teichoic acid biosynthesis. In terms of biological role, catalyzes the addition of a single ribitol phosphate unit onto the glycerol phosphate of the linkage unit, as a primer for polymerisation by TarL. This is Teichoic acid ribitol-phosphate primase (tarK) from Bacillus spizizenii (strain ATCC 23059 / NRRL B-14472 / W23) (Bacillus subtilis subsp. spizizenii).